Here is a 337-residue protein sequence, read N- to C-terminus: Oxidoreductase andH (337 aa).

It belongs to the NmrA-type oxidoreductase family.

It participates in secondary metabolite biosynthesis; terpenoid biosynthesis. Functionally, oxidoreductase; part of the gene cluster that mediates the biosynthesis of anditomin, a fungal meroterpenoid. The first step of the pathway is the synthesis of 3,5-dimethylorsellinic acid (DMOA) by the polyketide synthase andM. DMOA is then converted to the phthalide compound 5,7-dihydroxy-4,6-dimethylphthalide (DHDMP) by the cytochrome P450 monooxygenase andK, which is further prenylated by the prenyltransferase andD to yield farnesyl-DHDMP. Further epoxidation by the FAD-dependent monooxygenase andE leads to epoxyfarnesyl-DHDMP. The next step involves the terpene cyclase andB that converts epoxyfarnesyl-DHDMP into preandiloid A through opening of the epoxide ring followed by the cyclization of the farnesyl moiety. Preandiloid A is in turn oxidized at the C-3 hydroxyl group to yield preandiloid B by the dehydrogenase andC. The dioxygenase andA is solely responsible for the dehydrogenation of preandiloid B leading to the enone preandiloid C, as well as for the intriguing structural rearrangement to generate the bicyclo[2.2.2]octane core, transforming preandiloid C into andiconin. FAD-binding monooxygenase andJ then produces andilesin D which is reduced by dehydrogenase andI to yield andilesin A. Action of acetyltransferase andG followed by a spontaneous acetate elimination leads then to andilesin B, which is in turn substrate of the short chain dehydrogenase andH to yield andilesin C. Finally, the dioxygenase andF catalyzes the transformation of andilesin C to anditomin. This chain is Oxidoreductase andH, found in Emericella variicolor (Aspergillus stellatus).